The chain runs to 406 residues: Peptidase T (406 aa).

Histidine 80 is a Zn(2+) binding site. The active site involves aspartate 82. Aspartate 141 is a binding site for Zn(2+). Glutamate 175 (proton acceptor) is an active-site residue. Residues glutamate 176, aspartate 198, and histidine 380 each contribute to the Zn(2+) site.

This sequence belongs to the peptidase M20B family. Requires Zn(2+) as cofactor.

It localises to the cytoplasm. It carries out the reaction Release of the N-terminal residue from a tripeptide.. Functionally, cleaves the N-terminal amino acid of tripeptides. This chain is Peptidase T, found in Streptococcus mutans serotype c (strain ATCC 700610 / UA159).